The following is a 41-amino-acid chain: Large ribosomal subunit protein bL36B (41 aa).

This sequence belongs to the bacterial ribosomal protein bL36 family.

In Haemophilus ducreyi (strain 35000HP / ATCC 700724), this protein is Large ribosomal subunit protein bL36B.